Here is a 380-residue protein sequence, read N- to C-terminus: Endonuclease III homolog 2 (380 aa).

The short motif at R8–H12 is the Nuclear localization signal element. Residues V15–N40 are interaction with MLH1. K194 participates in a covalent cross-link: Glycyl lysine isopeptide (Lys-Gly) (interchain with G-Cter in SUMO). Positions F228 to L252 constitute a HhH domain. Catalysis depends on K248, which acts as the Nucleophile; for N-glycosylase activity. [4Fe-4S] cluster is bound by residues C319, C326, C329, and C335. The short motif at R376–K380 is the Nuclear localization signal element.

The protein belongs to the Nth/MutY family. Interacts with MLH1. It depends on [4Fe-4S] cluster as a cofactor. Post-translationally, monosumoylated.

The protein resides in the nucleus. It catalyses the reaction 2'-deoxyribonucleotide-(2'-deoxyribose 5'-phosphate)-2'-deoxyribonucleotide-DNA = a 3'-end 2'-deoxyribonucleotide-(2,3-dehydro-2,3-deoxyribose 5'-phosphate)-DNA + a 5'-end 5'-phospho-2'-deoxyribonucleoside-DNA + H(+). Bifunctional DNA N-glycosylase with associated apurinic/apyrimidinic (AP) lyase function that catalyzes the first step in base excision repair (BER), the primary repair pathway for the repair of oxidative DNA damage. The DNA N-glycosylase activity releases the damaged DNA base from DNA by cleaving the N-glycosidic bond, leaving an AP site. The AP-lyase activity cleaves the phosphodiester bond 3' to the AP site by a beta-elimination. Primarily recognizes and repairs oxidative base damage of pyrimidines, but also purine-derived lesions, alkylation damage as well as abasic sites. Can also repair the oxidation products of 8-oxoguanine. The protein is Endonuclease III homolog 2 (NTG2) of Saccharomyces cerevisiae (strain ATCC 204508 / S288c) (Baker's yeast).